The sequence spans 129 residues: Protein Turandot C (129 aa).

Residues 1 to 21 form the signal peptide; it reads MNASISLLCLALLLISPFCLG.

The protein belongs to the Turandot family.

The protein resides in the secreted. A humoral factor that may play a role in stress tolerance. The protein is Protein Turandot C of Drosophila melanogaster (Fruit fly).